The sequence spans 330 residues: Calponin-3 (330 aa).

Lys-23 carries the N6-acetyllysine modification. A Calponin-homology (CH) domain is found at 26-130 (QQAEEDLRNW…TLVALAGLAK (105 aa)). Position 158 is an N6-methyllysine (Lys-158). 3 Calponin-like repeats span residues 164-189 (IGLQ…RHLY), 204-229 (ISLQ…RDIY), and 243-268 (ISLQ…RQVY). The interval 279–330 (PVIHNGSQGTGTNGSEISDSDYQAEYPDEYHGEYPDDYPREYQYGDDQGIDY) is disordered. Residues 306–318 (DEYHGEYPDDYPR) are compositionally biased toward basic and acidic residues.

This sequence belongs to the calponin family.

Its function is as follows. Thin filament-associated protein that is implicated in the regulation and modulation of smooth muscle contraction. It is capable of binding to actin, calmodulin and tropomyosin. The interaction of calponin with actin inhibits the actomyosin Mg-ATPase activity. The sequence is that of Calponin-3 (Cnn3) from Mus musculus (Mouse).